Reading from the N-terminus, the 168-residue chain is Probable chemoreceptor glutamine deamidase CheD (168 aa).

It belongs to the CheD family.

The catalysed reaction is L-glutaminyl-[protein] + H2O = L-glutamyl-[protein] + NH4(+). Functionally, probably deamidates glutamine residues to glutamate on methyl-accepting chemotaxis receptors (MCPs), playing an important role in chemotaxis. In Pseudomonas syringae pv. tomato (strain ATCC BAA-871 / DC3000), this protein is Probable chemoreceptor glutamine deamidase CheD.